A 367-amino-acid chain; its full sequence is CCCH-type zinc finger protein moe-3 (367 aa).

The span at 1–15 (MSKVKGDLEKSDKRP) shows a compositional bias: basic and acidic residues. Positions 1–57 (MSKVKGDLEKSDKRPPSSMSTGSADSGVFSSGVHASSPSHSQGSSSQSGPPSPTTQL) are disordered. A compositionally biased stretch (low complexity) spans 30-49 (SSGVHASSPSHSQGSSSQSG). Residues 63–92 (ETANLIAVNEQLRKEIAENKQIQTNQMRAL) are a coiled coil. Positions 107–126 (SISPHHGFPQRPPRGERRMQ) are disordered. C3H1-type zinc fingers lie at residues 130–158 (SYKT…HGEE) and 172–200 (KYKT…HPDN). The interval 235-268 (NTRNSYNQQPPPMGGLEMQSSPMKSSSDSSHMRS) is disordered. A compositionally biased stretch (low complexity) spans 252–268 (MQSSPMKSSSDSSHMRS).

As to expression, exclusively expressed in the hermaphrodite gonad. Weakly distributed throughout gonadal oocytes from the mitotic stage to the developing diakinesis stage, with expression restricted to the distal region of the gonad.

Its function is as follows. Zinc-finger protein that may play a role in oocyte maturation and fertility. The sequence is that of CCCH-type zinc finger protein moe-3 from Caenorhabditis elegans.